We begin with the raw amino-acid sequence, 268 residues long: Ribosomal RNA small subunit methyltransferase A (268 aa).

Residues N23, I25, G50, E72, D97, and N116 each coordinate S-adenosyl-L-methionine.

This sequence belongs to the class I-like SAM-binding methyltransferase superfamily. rRNA adenine N(6)-methyltransferase family. RsmA subfamily.

It is found in the cytoplasm. It catalyses the reaction adenosine(1518)/adenosine(1519) in 16S rRNA + 4 S-adenosyl-L-methionine = N(6)-dimethyladenosine(1518)/N(6)-dimethyladenosine(1519) in 16S rRNA + 4 S-adenosyl-L-homocysteine + 4 H(+). Specifically dimethylates two adjacent adenosines (A1518 and A1519) in the loop of a conserved hairpin near the 3'-end of 16S rRNA in the 30S particle. May play a critical role in biogenesis of 30S subunits. The chain is Ribosomal RNA small subunit methyltransferase A from Rickettsia prowazekii (strain Madrid E).